A 256-amino-acid polypeptide reads, in one-letter code: Small ribosomal subunit protein eS1B (256 aa).

Ala-2 is modified (N-acetylalanine; partial).

This sequence belongs to the eukaryotic ribosomal protein eS1 family. In terms of assembly, component of the small ribosomal subunit. Mature ribosomes consist of a small (40S) and a large (60S) subunit. The 40S subunit contains about 33 different proteins and 1 molecule of RNA (18S). The 60S subunit contains about 49 different proteins and 3 molecules of RNA (25S, 5.8S and 5S).

The protein localises to the cytoplasm. In Clavispora lusitaniae (strain ATCC 42720) (Yeast), this protein is Small ribosomal subunit protein eS1B.